The chain runs to 105 residues: Small ribosomal subunit protein uS10 (105 aa).

It belongs to the universal ribosomal protein uS10 family. Part of the 30S ribosomal subunit.

In terms of biological role, involved in the binding of tRNA to the ribosomes. This chain is Small ribosomal subunit protein uS10, found in Bdellovibrio bacteriovorus (strain ATCC 15356 / DSM 50701 / NCIMB 9529 / HD100).